The primary structure comprises 58 residues: ATP synthase F(0) complex subunit k, mitochondrial (58 aa).

2 positions are modified to N6-acetyllysine; partial: lysine 16 and lysine 17. A helical transmembrane segment spans residues 23 to 45; it reads TLTGRMNCVLATYGSIALIVLYF.

Component of the ATP synthase complex composed at least of ATP5F1A/subunit alpha, ATP5F1B/subunit beta, ATP5MC1/subunit c (homooctomer), MT-ATP6/subunit a, MT-ATP8/subunit 8, ATP5ME/subunit e, ATP5MF/subunit f, ATP5MG/subunit g, ATP5MK/subunit k, ATP5MJ/subunit j, ATP5F1C/subunit gamma, ATP5F1D/subunit delta, ATP5F1E/subunit epsilon, ATP5PF/subunit F6, ATP5PB/subunit b, ATP5PD/subunit d, ATP5PO/subunit OSCP. ATP synthase complex consists of a soluble F(1) head domain (subunits alpha(3) and beta(3)) - the catalytic core - and a membrane F(0) domain - the membrane proton channel (subunits c, a, 8, e, f, g, k and j). These two domains are linked by a central stalk (subunits gamma, delta, and epsilon) rotating inside the F1 region and a stationary peripheral stalk (subunits F6, b, d, and OSCP). The ATP synthase complex/complex V exists as a monomeric and a dimeric supercomplex that helps shape mitochondrial cristae to optimize proton flow.

It localises to the mitochondrion membrane. In terms of biological role, subunit k, of the mitochondrial membrane ATP synthase complex (F(1)F(0) ATP synthase or Complex V) that produces ATP from ADP in the presence of a proton gradient across the membrane which is generated by electron transport complexes of the respiratory chain. ATP synthase complex consist of a soluble F(1) head domain - the catalytic core - and a membrane F(1) domain - the membrane proton channel. These two domains are linked by a central stalk rotating inside the F(1) region and a stationary peripheral stalk. During catalysis, ATP synthesis in the catalytic domain of F(1) is coupled via a rotary mechanism of the central stalk subunits to proton translocation. In vivo, can only synthesize ATP although its ATP hydrolase activity can be activated artificially in vitro. Part of the complex F(0) domain. Required for dimerization of the ATP synthase complex and as such regulates ATP synthesis in the mitochondria. The protein is ATP synthase F(0) complex subunit k, mitochondrial of Bos taurus (Bovine).